The following is a 138-amino-acid chain: Transposon Tn10 TetD protein (138 aa).

Residues 31-129 (KDVLLWIEHN…KVTPSYYRRN (99 aa)) enclose the HTH araC/xylS-type domain. 2 DNA-binding regions (H-T-H motif) span residues 48-69 (DDVA…KKVT) and 96-119 (ILEI…KYIF).

The protein is Transposon Tn10 TetD protein (tetD) of Escherichia coli.